The chain runs to 331 residues: 6-phosphogluconolactonase (331 aa).

The residue at position 287 (K287) is an N6-acetyllysine.

It belongs to the cycloisomerase 2 family.

It carries out the reaction 6-phospho-D-glucono-1,5-lactone + H2O = 6-phospho-D-gluconate + H(+). Its pathway is carbohydrate degradation; pentose phosphate pathway; D-ribulose 5-phosphate from D-glucose 6-phosphate (oxidative stage): step 2/3. Functionally, catalyzes the hydrolysis of 6-phosphogluconolactone to 6-phosphogluconate. The protein is 6-phosphogluconolactonase of Shigella sonnei (strain Ss046).